The sequence spans 89 residues: Small ribosomal subunit protein uS15 (89 aa).

Belongs to the universal ribosomal protein uS15 family. As to quaternary structure, part of the 30S ribosomal subunit. Forms a bridge to the 50S subunit in the 70S ribosome, contacting the 23S rRNA.

Functionally, one of the primary rRNA binding proteins, it binds directly to 16S rRNA where it helps nucleate assembly of the platform of the 30S subunit by binding and bridging several RNA helices of the 16S rRNA. In terms of biological role, forms an intersubunit bridge (bridge B4) with the 23S rRNA of the 50S subunit in the ribosome. The polypeptide is Small ribosomal subunit protein uS15 (Buchnera aphidicola subsp. Cinara cedri (strain Cc)).